The primary structure comprises 322 residues: Acetyl-coenzyme A carboxylase carboxyl transferase subunit alpha 2 (322 aa).

The 258-residue stretch at 37-294 folds into the CoA carboxyltransferase C-terminal domain; sequence EINRLSARSE…KRVLQESLRN (258 aa).

Belongs to the AccA family. Acetyl-CoA carboxylase is a heterohexamer composed of biotin carboxyl carrier protein (AccB), biotin carboxylase (AccC) and two subunits each of ACCase subunit alpha (AccA) and ACCase subunit beta (AccD).

Its subcellular location is the cytoplasm. The catalysed reaction is N(6)-carboxybiotinyl-L-lysyl-[protein] + acetyl-CoA = N(6)-biotinyl-L-lysyl-[protein] + malonyl-CoA. It functions in the pathway lipid metabolism; malonyl-CoA biosynthesis; malonyl-CoA from acetyl-CoA: step 1/1. Functionally, component of the acetyl coenzyme A carboxylase (ACC) complex. First, biotin carboxylase catalyzes the carboxylation of biotin on its carrier protein (BCCP) and then the CO(2) group is transferred by the carboxyltransferase to acetyl-CoA to form malonyl-CoA. Confers resistance to the endogenous polyketide antibiotic thailandamide. Can replace the endogenous gene in S.typhimurium, conferring slow growth and resistance to thailandamide. Can also replace the endogenous gene in E.coli, conferring resistance to thailandamide. The protein is Acetyl-coenzyme A carboxylase carboxyl transferase subunit alpha 2 of Burkholderia thailandensis (strain ATCC 700388 / DSM 13276 / CCUG 48851 / CIP 106301 / E264).